Reading from the N-terminus, the 4568-residue chain is Dynein beta chain, flagellar outer arm (4568 aa).

Positions Met-1–Ala-1880 are stem. Coiled coils occupy residues Phe-277–Asp-293, Glu-1158–Leu-1175, Lys-1372–Asp-1400, Glu-1614–Phe-1650, and Gln-1778–Leu-1825. The segment at Gly-1144 to Ala-1166 is disordered. Positions Glu-1150–Ala-1166 are enriched in basic and acidic residues. AAA regions lie at residues Tyr-1881–Val-2102, Glu-2164–Lys-2385, Gln-2493–Gly-2738, and Glu-2841–Tyr-3090. ATP is bound by residues Gly-1919–Thr-1926, Gly-2202–Thr-2209, and Gly-2530–Ser-2537. A coiled-coil region spans residues Leu-2831–Val-2848. Gly-2879–Gln-2886 is an ATP binding site. Coiled-coil stretches lie at residues Lys-3106 to Ile-3162, Lys-3339 to Ser-3425, and His-3648 to Glu-3728. The segment at Lys-3106–Ser-3425 is stalk. AAA stretches follow at residues Leu-3481–Glu-3711 and Met-3937–Asn-4172.

Belongs to the dynein heavy chain family. As to quaternary structure, consists of at least 3 heavy chains (alpha, beta and gamma), 2 intermediate chains and 8 light chains.

Its subcellular location is the cell projection. It localises to the cilium. It is found in the flagellum. The protein localises to the cytoplasm. The protein resides in the cytoskeleton. Its subcellular location is the flagellum axoneme. Functionally, force generating protein of eukaryotic cilia and flagella. Produces force towards the minus ends of microtubules. Dynein has ATPase activity; the force-producing power stroke is thought to occur on release of ADP. This is Dynein beta chain, flagellar outer arm (ODA4) from Chlamydomonas reinhardtii (Chlamydomonas smithii).